The primary structure comprises 319 residues: GTP 3',8-cyclase (319 aa).

The Radical SAM core domain maps to 4-227 (KHGRKINYLR…VETDKSSTAL (224 aa)). Arg13 is a binding site for GTP. Residues Cys20 and Cys24 each contribute to the [4Fe-4S] cluster site. S-adenosyl-L-methionine is bound at residue Tyr26. Cys27 lines the [4Fe-4S] cluster pocket. Residue Arg63 participates in GTP binding. An S-adenosyl-L-methionine-binding site is contributed by Gly67. Residue Thr94 coordinates GTP. Ser118 lines the S-adenosyl-L-methionine pocket. Lys155 serves as a coordination point for GTP. Met189 contacts S-adenosyl-L-methionine. [4Fe-4S] cluster contacts are provided by Cys249 and Cys252. 254 to 256 (RVR) contacts GTP. [4Fe-4S] cluster is bound at residue Cys266.

This sequence belongs to the radical SAM superfamily. MoaA family. In terms of assembly, monomer and homodimer. It depends on [4Fe-4S] cluster as a cofactor.

It catalyses the reaction GTP + AH2 + S-adenosyl-L-methionine = (8S)-3',8-cyclo-7,8-dihydroguanosine 5'-triphosphate + 5'-deoxyadenosine + L-methionine + A + H(+). It participates in cofactor biosynthesis; molybdopterin biosynthesis. In terms of biological role, catalyzes the cyclization of GTP to (8S)-3',8-cyclo-7,8-dihydroguanosine 5'-triphosphate. In Clostridium botulinum (strain Langeland / NCTC 10281 / Type F), this protein is GTP 3',8-cyclase.